A 526-amino-acid polypeptide reads, in one-letter code: MSSELVKRHGHTHYANIPYGYYVLIVSFFYLVFLGVLRIILKPRAAGFNSSKRSRLAQKLYLVNPVVHLPILLVAVLLPFYRHYSISEHATVYIKRLGRLSYALLPLNLLLNLRPNWLLRNNYTYTDLIPLHKWLSRCIIIIAVVHGILFLINWALGESGTLAKKIANPYNLAGVLLFAPLISMIFFSIGPMRRFSYNAFYVIHNLTGISFIFVVAFHARPSVTIPYLLINIAILLWQGFAKFYYAKRTDILSKNTDYQNTNLVNVQLPRMALPDQFEPACHIRISPYSRLHPLYWLYPSHPFTVASLPSDTVVDLIISESHHPKSFKLELGAPYSVINNFDPAVPRSCLEQAKRVAIVCGGSGISFGLPLYRYFKEIHPVEYIQFIWLVKDAYQLKILDKLDTIGLLDGSNDCHAFITRSVDDPNSNQETAPDLEFELESMTQDVVDENGAFVSERDGSPTSKFKFASINLGRRIDWATDLSQFVEPALVDNTWLLTCGPSDLIESGRQYAADNSINFASEIYAL.

7 helical membrane-spanning segments follow: residues 17–37, 60–80, 96–113, 138–158, 172–192, 199–219, and 221–241; these read IPYG…LGVL, LYLV…LLPF, RLGR…LLNL, CIII…ALGE, LAGV…IGPM, AFYV…AFHA, and PSVT…QGFA. The 118-residue stretch at 97–214 folds into the Ferric oxidoreductase domain; sequence LGRLSYALLP…NLTGISFIFV (118 aa). The FAD-binding FR-type domain occupies 238–370; the sequence is QGFAKFYYAK…GGSGISFGLP (133 aa).

It belongs to the ferric reductase (FRE) family. AIM14 subfamily.

It is found in the membrane. Its function is as follows. Probable cell surface metalloreductase. May be involved in iron or copper homeostasis. This Zygosaccharomyces rouxii (strain ATCC 2623 / CBS 732 / NBRC 1130 / NCYC 568 / NRRL Y-229) protein is Probable metalloreductase AIM14 (AIM14).